A 91-amino-acid chain; its full sequence is Small ribosomal subunit protein uS19 (91 aa).

Belongs to the universal ribosomal protein uS19 family.

Functionally, protein S19 forms a complex with S13 that binds strongly to the 16S ribosomal RNA. The polypeptide is Small ribosomal subunit protein uS19 (Sulfurimonas denitrificans (strain ATCC 33889 / DSM 1251) (Thiomicrospira denitrificans (strain ATCC 33889 / DSM 1251))).